A 433-amino-acid polypeptide reads, in one-letter code: Enolase (433 aa).

The disordered stretch occupies residues 37–59; the sequence is RAAVPSGASTGEHEAVELRDGDK. Positions 47 to 59 are enriched in basic and acidic residues; the sequence is GEHEAVELRDGDK. Gln166 is a binding site for (2R)-2-phosphoglycerate. Glu208 serves as the catalytic Proton donor. The Mg(2+) site is built by Asp245, Glu291, and Asp318. 4 residues coordinate (2R)-2-phosphoglycerate: Lys343, Arg372, Ser373, and Lys394. Lys343 (proton acceptor) is an active-site residue.

The protein belongs to the enolase family. The cofactor is Mg(2+).

It localises to the cytoplasm. Its subcellular location is the secreted. The protein localises to the cell surface. It carries out the reaction (2R)-2-phosphoglycerate = phosphoenolpyruvate + H2O. Its pathway is carbohydrate degradation; glycolysis; pyruvate from D-glyceraldehyde 3-phosphate: step 4/5. Catalyzes the reversible conversion of 2-phosphoglycerate (2-PG) into phosphoenolpyruvate (PEP). It is essential for the degradation of carbohydrates via glycolysis. The protein is Enolase of Leptospira biflexa serovar Patoc (strain Patoc 1 / Ames).